A 294-amino-acid chain; its full sequence is tRNA dimethylallyltransferase (294 aa).

An ATP-binding site is contributed by Gly10 to Thr17. Thr12 to Thr17 is a substrate binding site. The interaction with substrate tRNA stretch occupies residues Asp35–Gln38.

Belongs to the IPP transferase family. Monomer. It depends on Mg(2+) as a cofactor.

The catalysed reaction is adenosine(37) in tRNA + dimethylallyl diphosphate = N(6)-dimethylallyladenosine(37) in tRNA + diphosphate. In terms of biological role, catalyzes the transfer of a dimethylallyl group onto the adenine at position 37 in tRNAs that read codons beginning with uridine, leading to the formation of N6-(dimethylallyl)adenosine (i(6)A). This chain is tRNA dimethylallyltransferase, found in Streptococcus suis (strain 98HAH33).